Consider the following 233-residue polypeptide: Large ribosomal subunit protein uL1 (233 aa).

This sequence belongs to the universal ribosomal protein uL1 family. In terms of assembly, part of the 50S ribosomal subunit.

Functionally, binds directly to 23S rRNA. The L1 stalk is quite mobile in the ribosome, and is involved in E site tRNA release. In terms of biological role, protein L1 is also a translational repressor protein, it controls the translation of the L11 operon by binding to its mRNA. In Brucella suis (strain ATCC 23445 / NCTC 10510), this protein is Large ribosomal subunit protein uL1.